A 190-amino-acid polypeptide reads, in one-letter code: Photosynthetic NDH subunit of lumenal location 2, chloroplastic (190 aa).

A chloroplast-targeting transit peptide spans Met-1 to Cys-31. Residues Cys-32 to Lys-68 constitute a thylakoid transit peptide. Coiled-coil stretches lie at residues Glu-87–Leu-107 and Glu-139–Leu-159.

Belongs to the PsbQ family. In terms of assembly, part of the chloroplast NDH complex, composed of a mixture of chloroplast and nucleus encoded subunits. Component of the NDH lumenal subcomplex, at least composed of PnsL1, PnsL2, PnsL3, PnsL4 and PnsL5.

The protein localises to the plastid. It localises to the chloroplast thylakoid membrane. Functionally, NDH shuttles electrons from NAD(P)H:plastoquinone, via FMN and iron-sulfur (Fe-S) centers, to quinones in the photosynthetic chain and possibly in a chloroplast respiratory chain. The immediate electron acceptor for the enzyme in this species is believed to be plastoquinone. Couples the redox reaction to proton translocation, and thus conserves the redox energy in a proton gradient. Required for both formation and activity of the chloroplast NAD(P)H dehydrogenase (NDH) complex. The protein is Photosynthetic NDH subunit of lumenal location 2, chloroplastic of Arabidopsis thaliana (Mouse-ear cress).